An 80-amino-acid polypeptide reads, in one-letter code: Large ribosomal subunit protein bL31B (80 aa).

This sequence belongs to the bacterial ribosomal protein bL31 family. Type B subfamily. As to quaternary structure, part of the 50S ribosomal subunit.

This chain is Large ribosomal subunit protein bL31B, found in Xylella fastidiosa (strain 9a5c).